The sequence spans 261 residues: Protein phosphatase inhibitor 2 (261 aa).

Residues 1–16 (MNKDEEFLEEHHYKDD) are compositionally biased toward basic and acidic residues. A required for binding to pppB region spans residues 1-150 (MNKDEEFLEE…TPYHYYESEE (150 aa)). Residues 1–261 (MNKDEEFLEE…LNANLSDDEQ (261 aa)) are disordered. Positions 17-60 (DAIEGEEEQGEEEESDLDDDMYNIDGETNDDDDDDEAEDEESSE) are enriched in acidic residues. The span at 123-134 (LTINDMNKSSTM) shows a compositional bias: polar residues. Residues 150 to 242 (EETDESKKYL…KKFDNLRKAH (93 aa)) adopt a coiled-coil conformation. Residues 154–163 (ESKKYLENKF) are compositionally biased toward basic and acidic residues. The span at 195 to 206 (DKKKKKKNLKIH) shows a compositional bias: basic residues. Positions 212-225 (DDNDDNEDEDEDET) are enriched in acidic residues. A compositionally biased stretch (basic and acidic residues) spans 226-250 (EEKKENKKKFDNLRKAHYNEFKVVR).

It belongs to the protein phosphatase inhibitor 2 family. In terms of assembly, interacts with pppB.

Functionally, inhibitor of protein-phosphatase 1 (PP1). The sequence is that of Protein phosphatase inhibitor 2 (dpiA) from Dictyostelium discoideum (Social amoeba).